Here is a 320-residue protein sequence, read N- to C-terminus: Lipoyl synthase (320 aa).

[4Fe-4S] cluster contacts are provided by C66, C71, C77, C92, C96, C99, and S306. Positions C77–S295 constitute a Radical SAM core domain.

It belongs to the radical SAM superfamily. Lipoyl synthase family. Requires [4Fe-4S] cluster as cofactor.

It is found in the cytoplasm. It carries out the reaction [[Fe-S] cluster scaffold protein carrying a second [4Fe-4S](2+) cluster] + N(6)-octanoyl-L-lysyl-[protein] + 2 oxidized [2Fe-2S]-[ferredoxin] + 2 S-adenosyl-L-methionine + 4 H(+) = [[Fe-S] cluster scaffold protein] + N(6)-[(R)-dihydrolipoyl]-L-lysyl-[protein] + 4 Fe(3+) + 2 hydrogen sulfide + 2 5'-deoxyadenosine + 2 L-methionine + 2 reduced [2Fe-2S]-[ferredoxin]. The protein operates within protein modification; protein lipoylation via endogenous pathway; protein N(6)-(lipoyl)lysine from octanoyl-[acyl-carrier-protein]: step 2/2. Catalyzes the radical-mediated insertion of two sulfur atoms into the C-6 and C-8 positions of the octanoyl moiety bound to the lipoyl domains of lipoate-dependent enzymes, thereby converting the octanoylated domains into lipoylated derivatives. The chain is Lipoyl synthase from Thioalkalivibrio sulfidiphilus (strain HL-EbGR7).